Here is a 95-residue protein sequence, read N- to C-terminus: MLTLQAETRKEKGTGFSRRLRIHNKFPAVLYGVKKTEILLILDHNTTFNLQKKIEFYKENLLLCVQDKKYKVKVQAIQRHSFKSKLLHIDFLYVE.

It belongs to the bacterial ribosomal protein bL25 family. As to quaternary structure, part of the 50S ribosomal subunit; part of the 5S rRNA/L5/L18/L25 subcomplex. Contacts the 5S rRNA. Binds to the 5S rRNA independently of L5 and L18.

This is one of the proteins that binds to the 5S RNA in the ribosome where it forms part of the central protuberance. This Buchnera aphidicola subsp. Acyrthosiphon pisum (strain 5A) protein is Large ribosomal subunit protein bL25.